Consider the following 362-residue polypeptide: Peptide chain release factor 1 (362 aa).

Q237 bears the N5-methylglutamine mark. The interval 279 to 305 (RLQQAEDEKRRSEEESSRRNLVASGDR) is disordered. Basic and acidic residues predominate over residues 282-296 (QAEDEKRRSEEESSR).

This sequence belongs to the prokaryotic/mitochondrial release factor family. In terms of processing, methylated by PrmC. Methylation increases the termination efficiency of RF1.

Its subcellular location is the cytoplasm. Peptide chain release factor 1 directs the termination of translation in response to the peptide chain termination codons UAG and UAA. This is Peptide chain release factor 1 from Colwellia psychrerythraea (strain 34H / ATCC BAA-681) (Vibrio psychroerythus).